The chain runs to 530 residues: uncharacterized protein (530 aa).

Polar residues-rich tracts occupy residues 60–74 and 92–103; these read LNESSLRSQQESSTP and GQGTSRPLPTLS. 2 disordered regions span residues 60 to 103 and 121 to 155; these read LNES…PTLS and ASSTNEPQELPDPRDAPREGSFRLDGNQSEFGLGN. Positions 131-142 are enriched in basic and acidic residues; it reads PDPRDAPREGSF.

This is an uncharacterized protein from Mus musculus (Mouse).